Consider the following 618-residue polypeptide: 2-succinyl-5-enolpyruvyl-6-hydroxy-3-cyclohexene-1-carboxylate synthase (618 aa).

The segment at 192–215 (DPVAERGRDGPYVDVTPGSPEPGD) is disordered.

The protein belongs to the TPP enzyme family. MenD subfamily. As to quaternary structure, homodimer. Requires Mg(2+) as cofactor. The cofactor is Mn(2+). It depends on thiamine diphosphate as a cofactor.

It carries out the reaction isochorismate + 2-oxoglutarate + H(+) = 5-enolpyruvoyl-6-hydroxy-2-succinyl-cyclohex-3-ene-1-carboxylate + CO2. Its pathway is quinol/quinone metabolism; 1,4-dihydroxy-2-naphthoate biosynthesis; 1,4-dihydroxy-2-naphthoate from chorismate: step 2/7. It participates in quinol/quinone metabolism; menaquinone biosynthesis. Its function is as follows. Catalyzes the thiamine diphosphate-dependent decarboxylation of 2-oxoglutarate and the subsequent addition of the resulting succinic semialdehyde-thiamine pyrophosphate anion to isochorismate to yield 2-succinyl-5-enolpyruvyl-6-hydroxy-3-cyclohexene-1-carboxylate (SEPHCHC). The chain is 2-succinyl-5-enolpyruvyl-6-hydroxy-3-cyclohexene-1-carboxylate synthase from Halorubrum lacusprofundi (strain ATCC 49239 / DSM 5036 / JCM 8891 / ACAM 34).